A 411-amino-acid chain; its full sequence is Glutamate dehydrogenase 1, mitochondrial (411 aa).

The transit peptide at 1 to 18 (MNALAATSRNFKQAAKLL) directs the protein to the mitochondrion. Lys-102 is an active-site residue.

The protein belongs to the Glu/Leu/Phe/Val dehydrogenases family.

It localises to the mitochondrion. It carries out the reaction L-glutamate + NAD(+) + H2O = 2-oxoglutarate + NH4(+) + NADH + H(+). The catalysed reaction is L-glutamate + NADP(+) + H2O = 2-oxoglutarate + NH4(+) + NADPH + H(+). The sequence is that of Glutamate dehydrogenase 1, mitochondrial (GDH1) from Oryza sativa subsp. indica (Rice).